A 649-amino-acid chain; its full sequence is MASNMDREMILADFQACTGIENIDEAITLLEQNNWDLVAAINGVIPQENGILQSDFGGETMPGPTFDPASPPAPAPAPSSSAFRPVMPSRQIVERQPRMLDFRVEYRDRNVDVVLEDSCTVGEIKQILENELQIPVPKMLLKGWKTGDVEDSTVLKSLHLPKNNSLYVLTPDLPPPSSSSHAGALQESLNQNFMLIITHREVQREYNLNFSGSSTVQEVKRNVYDLTSIPVRHQLWEGWPASATDDSMCLAESGLSYPCHRLTVGRRTSPVQTREQSEEQSTVVHMVSDSDGDDFEDASEFGVVDGEVFGMASSTMRKSPMMPENAENEGDALLQFTAEFSSRYGDCHPVFFIGSLEAAFQEAFYVKARDRKLLAIYLHHDESVLTNVFCSQMLCAESIVSYLSQNFITWAWDLTKDANRARFLTMCNRHFGSVIAQTIRTQKTDQFPLFLIIMGKRSSNEVLNVIQGNTTVDELMMRLMAAMEIFSAQQQEDIKDEDEREARENVKREQDEAYRLSLEADRAKREAHEREMAEQFRLEQIRKEQEEEREAIRLSLEQALPPEPEEENAEPVSKLRIRTPSGEFLERRFLASNKLQIVFDFVASKGFPWDEFKLLSTFPRRDVTQLDPNKSLLEVNLFPQETLFLLAKE.

Residues Met-1–Gly-57 enclose the UBA domain. The disordered stretch occupies residues Asp-55–Arg-84. The residue at position 319 (Ser-319) is a Phosphoserine. The UBX domain occupies Asn-568–Leu-645. Residue Thr-579 is modified to Phosphothreonine. Ser-581 is subject to Phosphoserine.

In terms of assembly, interacts with CDT1 and ATPase VCP/p97. Interacts (via UBA domain) with FAS (via death domain). Interacts (via UBA domain) with NLRP12 (via DAPIN/PYRIN domain). As to expression, central nervous system.

Its subcellular location is the nucleus. In terms of biological role, ubiquitin-binding protein. Required for the progression of DNA replication forks by targeting DNA replication licensing factor CDT1 for degradation. Potentiates but cannot initiate FAS-induced apoptosis. This Rattus norvegicus (Rat) protein is FAS-associated factor 1 (Faf1).